A 227-amino-acid chain; its full sequence is Cytochrome c oxidase subunit 2 (227 aa).

Residues M1–S14 lie on the Mitochondrial intermembrane side of the membrane. A helical membrane pass occupies residues P15 to M45. Residues L46–Q59 are Mitochondrial matrix-facing. The helical transmembrane segment at E60 to M87 threads the bilayer. Residues D88–S227 are Mitochondrial intermembrane-facing. H161, C196, E198, C200, H204, and M207 together coordinate Cu cation. E198 is a Mg(2+) binding site.

This sequence belongs to the cytochrome c oxidase subunit 2 family. Component of the cytochrome c oxidase (complex IV, CIV), a multisubunit enzyme composed of 14 subunits. The complex is composed of a catalytic core of 3 subunits MT-CO1, MT-CO2 and MT-CO3, encoded in the mitochondrial DNA, and 11 supernumerary subunits COX4I, COX5A, COX5B, COX6A, COX6B, COX6C, COX7A, COX7B, COX7C, COX8 and NDUFA4, which are encoded in the nuclear genome. The complex exists as a monomer or a dimer and forms supercomplexes (SCs) in the inner mitochondrial membrane with NADH-ubiquinone oxidoreductase (complex I, CI) and ubiquinol-cytochrome c oxidoreductase (cytochrome b-c1 complex, complex III, CIII), resulting in different assemblies (supercomplex SCI(1)III(2)IV(1) and megacomplex MCI(2)III(2)IV(2)). Found in a complex with TMEM177, COA6, COX18, COX20, SCO1 and SCO2. Interacts with TMEM177 in a COX20-dependent manner. Interacts with COX20. Interacts with COX16. It depends on Cu cation as a cofactor.

The protein localises to the mitochondrion inner membrane. It carries out the reaction 4 Fe(II)-[cytochrome c] + O2 + 8 H(+)(in) = 4 Fe(III)-[cytochrome c] + 2 H2O + 4 H(+)(out). In terms of biological role, component of the cytochrome c oxidase, the last enzyme in the mitochondrial electron transport chain which drives oxidative phosphorylation. The respiratory chain contains 3 multisubunit complexes succinate dehydrogenase (complex II, CII), ubiquinol-cytochrome c oxidoreductase (cytochrome b-c1 complex, complex III, CIII) and cytochrome c oxidase (complex IV, CIV), that cooperate to transfer electrons derived from NADH and succinate to molecular oxygen, creating an electrochemical gradient over the inner membrane that drives transmembrane transport and the ATP synthase. Cytochrome c oxidase is the component of the respiratory chain that catalyzes the reduction of oxygen to water. Electrons originating from reduced cytochrome c in the intermembrane space (IMS) are transferred via the dinuclear copper A center (CU(A)) of subunit 2 and heme A of subunit 1 to the active site in subunit 1, a binuclear center (BNC) formed by heme A3 and copper B (CU(B)). The BNC reduces molecular oxygen to 2 water molecules using 4 electrons from cytochrome c in the IMS and 4 protons from the mitochondrial matrix. In Gerbilliscus robustus (Fringe-tailed gerbil), this protein is Cytochrome c oxidase subunit 2 (MT-CO2).